We begin with the raw amino-acid sequence, 142 residues long: Protein E6 (142 aa).

2 zinc fingers span residues 30-66 and 103-139; these read CVFC…CTPC and CFDC…CRNC.

Belongs to the papillomaviridae E6 protein family. In terms of assembly, forms homodimers. Interacts with ubiquitin-protein ligase UBE3A/E6-AP; this interaction stimulates UBE3A ubiquitin activity. Interacts with host BAK1.

It is found in the host cytoplasm. It localises to the host nucleus. Plays a major role in the induction and maintenance of cellular transformation. E6 associates with host UBE3A/E6-AP ubiquitin-protein ligase and modulates its activity. Protects host keratinocytes from apoptosis by mediating the degradation of host BAK1. May also inhibit host immune response. This Homo sapiens (Human) protein is Protein E6.